A 159-amino-acid chain; its full sequence is uncharacterized protein (159 aa).

This sequence belongs to the SufE family.

This is an uncharacterized protein from Synechocystis sp. (strain ATCC 27184 / PCC 6803 / Kazusa).